The chain runs to 214 residues: CASP-like protein 3A1 (214 aa).

At 1-49 (MTNGQKIEVAVQLPESKVAATENNETMSGPLVVGGGVAKPFGRKADVMH) the chain is on the cytoplasmic side. Residues 50 to 70 (VILRLLCTITSVTAVSFMVTA) form a helical membrane-spanning segment. Over 71–96 (HQSSTVSIYGFMLPVRSKWSFSHSFE) the chain is Extracellular. Residues 97-117 (YLVGVSAAVAAHSLLQLLISM) traverse the membrane as a helical segment. At 118-132 (SRLLRKSPVIPSRSH) the chain is on the cytoplasmic side. A helical membrane pass occupies residues 133–153 (AWLIFAGDQVFAYAMISAGAA). Over 154-182 (ASGVTNLNRTGIQHTALPNFCKPLNYFCN) the chain is Extracellular. An N-linked (GlcNAc...) asparagine glycan is attached at Asn161. The helical transmembrane segment at 183-203 (HVAVSIAFAFISCLLLAALAV) threads the bilayer. The Cytoplasmic portion of the chain corresponds to 204-214 (QEVIWLSKSKY).

This sequence belongs to the Casparian strip membrane proteins (CASP) family. As to quaternary structure, homodimer and heterodimers.

The protein localises to the cell membrane. This is CASP-like protein 3A1 from Ricinus communis (Castor bean).